Reading from the N-terminus, the 385-residue chain is Transcription termination factor 2, mitochondrial (385 aa).

Residues 1 to 35 (MPWRLPTGHQLCRLCLLRKPRPALKIKPSSACVTY) constitute a mitochondrion transit peptide.

The protein belongs to the mTERF family. As to quaternary structure, monomer.

Its subcellular location is the mitochondrion matrix. The protein resides in the mitochondrion nucleoid. Binds mitochondrial DNA and plays a role in the regulation of transcription of mitochondrial mRNA and rRNA species. The sequence is that of Transcription termination factor 2, mitochondrial (Mterf2) from Mus musculus (Mouse).